Reading from the N-terminus, the 253-residue chain is Triosephosphate isomerase (253 aa).

Substrate is bound by residues N12 and K14. H96 acts as the Electrophile in catalysis. E169 serves as the catalytic Proton acceptor.

This sequence belongs to the triosephosphate isomerase family. Homodimer.

It is found in the cytoplasm. It carries out the reaction D-glyceraldehyde 3-phosphate = dihydroxyacetone phosphate. The protein operates within carbohydrate biosynthesis; gluconeogenesis. It functions in the pathway carbohydrate degradation; glycolysis; D-glyceraldehyde 3-phosphate from glycerone phosphate: step 1/1. In terms of biological role, antigen to the host M.1 monoclonal antibody. The chain is Triosephosphate isomerase (TPI) from Schistosoma mansoni (Blood fluke).